The chain runs to 407 residues: Imidazolonepropionase (407 aa).

Fe(3+) contacts are provided by H68 and H70. The Zn(2+) site is built by H68 and H70. The 4-imidazolone-5-propanoate site is built by R77, Y140, and H173. Y140 serves as a coordination point for N-formimidoyl-L-glutamate. Position 238 (H238) interacts with Fe(3+). Position 238 (H238) interacts with Zn(2+). Residue Q241 participates in 4-imidazolone-5-propanoate binding. D313 contributes to the Fe(3+) binding site. Residue D313 participates in Zn(2+) binding. N315 and G317 together coordinate N-formimidoyl-L-glutamate. T318 lines the 4-imidazolone-5-propanoate pocket.

This sequence belongs to the metallo-dependent hydrolases superfamily. HutI family. Zn(2+) serves as cofactor. The cofactor is Fe(3+).

It is found in the cytoplasm. The catalysed reaction is 4-imidazolone-5-propanoate + H2O = N-formimidoyl-L-glutamate. The protein operates within amino-acid degradation; L-histidine degradation into L-glutamate; N-formimidoyl-L-glutamate from L-histidine: step 3/3. Its function is as follows. Catalyzes the hydrolytic cleavage of the carbon-nitrogen bond in imidazolone-5-propanoate to yield N-formimidoyl-L-glutamate. It is the third step in the universal histidine degradation pathway. The chain is Imidazolonepropionase from Burkholderia mallei (strain ATCC 23344).